We begin with the raw amino-acid sequence, 159 residues long: Cyclic pyranopterin monophosphate synthase (159 aa).

Residues 75–77 (LCH) and 113–114 (ME) contribute to the substrate site. Residue D128 is part of the active site.

This sequence belongs to the MoaC family. Homohexamer; trimer of dimers.

It catalyses the reaction (8S)-3',8-cyclo-7,8-dihydroguanosine 5'-triphosphate = cyclic pyranopterin phosphate + diphosphate. It functions in the pathway cofactor biosynthesis; molybdopterin biosynthesis. Its function is as follows. Catalyzes the conversion of (8S)-3',8-cyclo-7,8-dihydroguanosine 5'-triphosphate to cyclic pyranopterin monophosphate (cPMP). The sequence is that of Cyclic pyranopterin monophosphate synthase from Vibrio vulnificus (strain YJ016).